The primary structure comprises 123 residues: Holo-[acyl-carrier-protein] synthase (123 aa).

Asp-8 and Glu-56 together coordinate Mg(2+).

The protein belongs to the P-Pant transferase superfamily. AcpS family. The cofactor is Mg(2+).

Its subcellular location is the cytoplasm. The catalysed reaction is apo-[ACP] + CoA = holo-[ACP] + adenosine 3',5'-bisphosphate + H(+). Functionally, transfers the 4'-phosphopantetheine moiety from coenzyme A to a Ser of acyl-carrier-protein. This chain is Holo-[acyl-carrier-protein] synthase, found in Clostridium beijerinckii (strain ATCC 51743 / NCIMB 8052) (Clostridium acetobutylicum).